The sequence spans 181 residues: ATP synthase subunit delta (181 aa).

This sequence belongs to the ATPase delta chain family. In terms of assembly, F-type ATPases have 2 components, F(1) - the catalytic core - and F(0) - the membrane proton channel. F(1) has five subunits: alpha(3), beta(3), gamma(1), delta(1), epsilon(1). F(0) has three main subunits: a(1), b(2) and c(10-14). The alpha and beta chains form an alternating ring which encloses part of the gamma chain. F(1) is attached to F(0) by a central stalk formed by the gamma and epsilon chains, while a peripheral stalk is formed by the delta and b chains.

The protein resides in the cell membrane. Functionally, f(1)F(0) ATP synthase produces ATP from ADP in the presence of a proton or sodium gradient. F-type ATPases consist of two structural domains, F(1) containing the extramembraneous catalytic core and F(0) containing the membrane proton channel, linked together by a central stalk and a peripheral stalk. During catalysis, ATP synthesis in the catalytic domain of F(1) is coupled via a rotary mechanism of the central stalk subunits to proton translocation. In terms of biological role, this protein is part of the stalk that links CF(0) to CF(1). It either transmits conformational changes from CF(0) to CF(1) or is implicated in proton conduction. In Mycoplasma mycoides subsp. mycoides SC (strain CCUG 32753 / NCTC 10114 / PG1), this protein is ATP synthase subunit delta.